Consider the following 500-residue polypeptide: NAD(P)H-quinone oxidoreductase chain 4, chloroplastic (500 aa).

Transmembrane regions (helical) follow at residues phenylalanine 4–leucine 24, tyrosine 35–phenylalanine 55, leucine 87–valine 107, leucine 113–serine 130, leucine 134–methionine 154, phenylalanine 167–leucine 187, valine 207–isoleucine 227, histidine 242–isoleucine 262, alanine 272–alanine 292, isoleucine 305–aspartate 325, glycine 330–glycine 350, leucine 386–threonine 406, isoleucine 416–methionine 436, and leucine 462–valine 482.

This sequence belongs to the complex I subunit 4 family.

It is found in the plastid. It localises to the chloroplast thylakoid membrane. The catalysed reaction is a plastoquinone + NADH + (n+1) H(+)(in) = a plastoquinol + NAD(+) + n H(+)(out). It carries out the reaction a plastoquinone + NADPH + (n+1) H(+)(in) = a plastoquinol + NADP(+) + n H(+)(out). The sequence is that of NAD(P)H-quinone oxidoreductase chain 4, chloroplastic from Helianthus annuus (Common sunflower).